The chain runs to 643 residues: Arginine--tRNA ligase, mitochondrial (643 aa).

The short motif at 188–198 (PNIAKPFHAGH) is the 'HIGH' region element.

This sequence belongs to the class-I aminoacyl-tRNA synthetase family.

It is found in the mitochondrion matrix. The catalysed reaction is tRNA(Arg) + L-arginine + ATP = L-arginyl-tRNA(Arg) + AMP + diphosphate. This Saccharomyces cerevisiae (strain ATCC 204508 / S288c) (Baker's yeast) protein is Arginine--tRNA ligase, mitochondrial (MSR1).